A 214-amino-acid polypeptide reads, in one-letter code: FMN-dependent NADH:quinone oxidoreductase 1 (214 aa).

Residues Ser17–Ser19 and Ser144–Gly147 contribute to the FMN site.

It belongs to the azoreductase type 1 family. Homodimer. FMN serves as cofactor.

The enzyme catalyses 2 a quinone + NADH + H(+) = 2 a 1,4-benzosemiquinone + NAD(+). It catalyses the reaction N,N-dimethyl-1,4-phenylenediamine + anthranilate + 2 NAD(+) = 2-(4-dimethylaminophenyl)diazenylbenzoate + 2 NADH + 2 H(+). Functionally, quinone reductase that provides resistance to thiol-specific stress caused by electrophilic quinones. Its function is as follows. Also exhibits azoreductase activity. Catalyzes the reductive cleavage of the azo bond in aromatic azo compounds to the corresponding amines. The polypeptide is FMN-dependent NADH:quinone oxidoreductase 1 (Lactococcus lactis subsp. lactis (strain IL1403) (Streptococcus lactis)).